The primary structure comprises 105 residues: Membrane-stabilizing protein A (105 aa).

The chain crosses the membrane as a helical span at residues 1–21 (MQFYLILLAILYLIVSFISIF). Over 22–29 (KMEVVFTR) the chain is Cytoplasmic. Residues 30–50 (ILRIIMGVLLLFVLALTTMSF) traverse the membrane as a helical segment. Residues 51-55 (PKENW) are Extracellular-facing. A helical transmembrane segment spans residues 56 to 76 (WVFIVLLLLVGNVEVTGFKML). The Cytoplasmic portion of the chain corresponds to 77–84 (KKDLKGVN). Residues 85–105 (ILNLMSLFIFVIYFILTIVLF) traverse the membrane as a helical segment.

The protein belongs to the MspA family.

It is found in the membrane. Functionally, plays a role in toxin production, resistance to host innate immune mechanisms, and iron homeostasis. This chain is Membrane-stabilizing protein A, found in Staphylococcus aureus (strain NCTC 8325 / PS 47).